We begin with the raw amino-acid sequence, 331 residues long: MIIAIDGMGGDNAPEAVVKGCVEAIKGNSSIHIIITGPSDKISAELKKYTFNEESIEIVDAKDVITNNEHPVMAVRRKKESSLYKALNLVKEGKADAVISAGSTGALMAGATLMIGRIKGIDRVALSPIMPGKNSPFMVTDAGANVDCKPQYLVQFALMGKIYFESVLGVKKPTIGLVNIGAEEEKGNELTKSAYKLLKESGLNFVGNVEPRDASTGDVDILVCDGFVGNTLLKMYEGVALNLFKMLKSEITSSTRAKVGALMLKPVLKDFAKKFDYSEYGGSPFLGSKGIVIKAHGSSNSKAFKNAINQAVSCSENKIIDKISRQLEELN.

The protein belongs to the PlsX family. As to quaternary structure, homodimer. Probably interacts with PlsY.

Its subcellular location is the cytoplasm. The catalysed reaction is a fatty acyl-[ACP] + phosphate = an acyl phosphate + holo-[ACP]. Its pathway is lipid metabolism; phospholipid metabolism. In terms of biological role, catalyzes the reversible formation of acyl-phosphate (acyl-PO(4)) from acyl-[acyl-carrier-protein] (acyl-ACP). This enzyme utilizes acyl-ACP as fatty acyl donor, but not acyl-CoA. This chain is Phosphate acyltransferase, found in Clostridium acetobutylicum (strain ATCC 824 / DSM 792 / JCM 1419 / IAM 19013 / LMG 5710 / NBRC 13948 / NRRL B-527 / VKM B-1787 / 2291 / W).